A 440-amino-acid polypeptide reads, in one-letter code: Chromosomal replication initiator protein DnaA (440 aa).

The domain I, interacts with DnaA modulators stretch occupies residues Met1–Thr69. Residues Thr69–Thr96 are domain II. The segment at Pro97–Lys313 is domain III, AAA+ region. Positions 140, 142, 143, and 144 each coordinate ATP. The interval Glu314–Gly440 is domain IV, binds dsDNA.

It belongs to the DnaA family. Oligomerizes as a right-handed, spiral filament on DNA at oriC.

The protein resides in the cytoplasm. Plays an essential role in the initiation and regulation of chromosomal replication. ATP-DnaA binds to the origin of replication (oriC) to initiate formation of the DNA replication initiation complex once per cell cycle. Binds the DnaA box (a 9 base pair repeat at the origin) and separates the double-stranded (ds)DNA. Forms a right-handed helical filament on oriC DNA; dsDNA binds to the exterior of the filament while single-stranded (ss)DNA is stabiized in the filament's interior. The ATP-DnaA-oriC complex binds and stabilizes one strand of the AT-rich DNA unwinding element (DUE), permitting loading of DNA polymerase. After initiation quickly degrades to an ADP-DnaA complex that is not apt for DNA replication. Binds acidic phospholipids. This chain is Chromosomal replication initiator protein DnaA, found in Thermotoga petrophila (strain ATCC BAA-488 / DSM 13995 / JCM 10881 / RKU-1).